We begin with the raw amino-acid sequence, 270 residues long: Interleukin-1 beta (270 aa).

The propeptide occupies 1–118; the sequence is MATVPEPTSE…VYDDDAFVCD (118 aa).

This sequence belongs to the IL-1 family. As to quaternary structure, monomer. In its precursor form, weakly interacts with full-length MEFV; the mature cytokine does not interact at all. Interacts with integrins ITGAV:ITGBV and ITGA5:ITGB1; integrin-binding is required for IL1B signaling. Interacts with cargo receptor TMED10; the interaction is direct and is required for the secretion of IL1B mature form. Interacts with HSP90AB1; the interaction facilitates cargo translocation into the ERGIC. Interacts with HSP90B1; the interaction facilitates cargo translocation into the ERGIC.

It is found in the cytoplasm. The protein localises to the cytosol. Its subcellular location is the secreted. The protein resides in the lysosome. It localises to the extracellular exosome. In terms of biological role, potent pro-inflammatory cytokine. Initially discovered as the major endogenous pyrogen, induces prostaglandin synthesis, neutrophil influx and activation, T-cell activation and cytokine production, B-cell activation and antibody production, and fibroblast proliferation and collagen production. Promotes Th17 differentiation of T-cells. Synergizes with IL12/interleukin-12 to induce IFNG synthesis from T-helper 1 (Th1) cells. Plays a role in angiogenesis by inducing VEGF production synergistically with TNF and IL6. Involved in transduction of inflammation downstream of pyroptosis: its mature form is specifically released in the extracellular milieu by passing through the gasdermin-D (GSDMD) pore. In Eumetopias jubatus (Steller sea lion), this protein is Interleukin-1 beta (IL1B).